Here is a 55-residue protein sequence, read N- to C-terminus: uncharacterized protein (55 aa).

This is an uncharacterized protein from Salmonella typhimurium (strain LT2 / SGSC1412 / ATCC 700720).